Consider the following 281-residue polypeptide: 2,3,4,5-tetrahydropyridine-2,6-dicarboxylate N-succinyltransferase (281 aa).

This sequence belongs to the transferase hexapeptide repeat family.

The protein resides in the cytoplasm. It carries out the reaction (S)-2,3,4,5-tetrahydrodipicolinate + succinyl-CoA + H2O = (S)-2-succinylamino-6-oxoheptanedioate + CoA. The protein operates within amino-acid biosynthesis; L-lysine biosynthesis via DAP pathway; LL-2,6-diaminopimelate from (S)-tetrahydrodipicolinate (succinylase route): step 1/3. The protein is 2,3,4,5-tetrahydropyridine-2,6-dicarboxylate N-succinyltransferase of Methylobacterium sp. (strain 4-46).